The following is a 267-amino-acid chain: Cilia- and flagella-associated protein 300 (267 aa).

Belongs to the CFAP300 family. In terms of assembly, interacts with DNAAF2.

It is found in the cytoplasm. It localises to the cytoskeleton. Its subcellular location is the cilium axoneme. Cilium- and flagellum-specific protein that plays a role in axonemal structure organization and motility. May play a role in outer and inner dynein arm assembly. The protein is Cilia- and flagella-associated protein 300 of Rattus norvegicus (Rat).